A 214-amino-acid chain; its full sequence is MNYPHPIIAREGWPFIAIAAVIALLIHAVGGFGFAWPFWLLLVFVVQFFRDPQRPIPAQPNAVLCPADGRIVAVETAQDPYANREALKISVFMNVFNVHSQRSPVDGAISKVEYFPGAFLNAAIDKASTENERNAVVIQTASGKTVTAVQIAGLVARRILCYVRAGEPLSRGQRYGFIRFGSRVDVYLPLGSRAKVSIGEKVYASSTILAELEQ.

Catalysis depends on Ser182, which acts as the Schiff-base intermediate with substrate; via pyruvic acid. A Pyruvic acid (Ser); by autocatalysis modification is found at Ser182.

Belongs to the phosphatidylserine decarboxylase family. PSD-A subfamily. Heterodimer of a large membrane-associated beta subunit and a small pyruvoyl-containing alpha subunit. Requires pyruvate as cofactor. Is synthesized initially as an inactive proenzyme. Formation of the active enzyme involves a self-maturation process in which the active site pyruvoyl group is generated from an internal serine residue via an autocatalytic post-translational modification. Two non-identical subunits are generated from the proenzyme in this reaction, and the pyruvate is formed at the N-terminus of the alpha chain, which is derived from the carboxyl end of the proenzyme. The post-translation cleavage follows an unusual pathway, termed non-hydrolytic serinolysis, in which the side chain hydroxyl group of the serine supplies its oxygen atom to form the C-terminus of the beta chain, while the remainder of the serine residue undergoes an oxidative deamination to produce ammonia and the pyruvoyl prosthetic group on the alpha chain.

The protein resides in the cell membrane. The enzyme catalyses a 1,2-diacyl-sn-glycero-3-phospho-L-serine + H(+) = a 1,2-diacyl-sn-glycero-3-phosphoethanolamine + CO2. Its pathway is phospholipid metabolism; phosphatidylethanolamine biosynthesis; phosphatidylethanolamine from CDP-diacylglycerol: step 2/2. In terms of biological role, catalyzes the formation of phosphatidylethanolamine (PtdEtn) from phosphatidylserine (PtdSer). The polypeptide is Phosphatidylserine decarboxylase proenzyme (Burkholderia lata (strain ATCC 17760 / DSM 23089 / LMG 22485 / NCIMB 9086 / R18194 / 383)).